The primary structure comprises 198 residues: TM2 domain-containing protein 2 (198 aa).

The first 27 residues, 1 to 27 (MRWPVPPLGYLLLGGQGLLLTFSLISS), serve as a signal peptide directing secretion. The Extracellular segment spans residues 28-128 (QNNTSPVTYP…FLRGNRPCIK (101 aa)). 3 N-linked (GlcNAc...) asparagine glycosylation sites follow: Asn-29, Asn-40, and Asn-76. Residues 129–149 (YTGHYFITTLLYSFFLGCFGV) traverse the membrane as a helical segment. The 49-residue stretch at 131-179 (GHYFITTLLYSFFLGCFGVDRFCLGHTGTAVGKLLTWGGLGIWWFVDLI) folds into the TM2 domain. At 150–166 (DRFCLGHTGTAVGKLLT) the chain is on the cytoplasmic side. Residues 167-187 (WGGLGIWWFVDLILLITGGLM) form a helical membrane-spanning segment. Residues 188 to 198 (PSDNSNWCTIY) lie on the Extracellular side of the membrane.

The protein belongs to the TM2 family.

It localises to the membrane. The sequence is that of TM2 domain-containing protein 2 (tm2d2) from Xenopus laevis (African clawed frog).